A 188-amino-acid chain; its full sequence is V-type ATP synthase subunit E (188 aa).

This sequence belongs to the V-ATPase E subunit family.

Its function is as follows. Produces ATP from ADP in the presence of a proton gradient across the membrane. This chain is V-type ATP synthase subunit E (atpE), found in Thermus thermophilus (strain ATCC 27634 / DSM 579 / HB8).